The chain runs to 340 residues: ATPase get3 (340 aa).

34 to 41 is a binding site for ATP; sequence KGGVGKTT. Residue D63 is part of the active site. Residues E245 and N272 each coordinate ATP. Zn(2+) contacts are provided by C283 and C286.

The protein belongs to the arsA ATPase family. As to quaternary structure, homodimer.

It localises to the cytoplasm. The protein localises to the endoplasmic reticulum. ATPase required for the post-translational delivery of tail-anchored (TA) proteins to the endoplasmic reticulum. Recognizes and selectively binds the transmembrane domain of TA proteins in the cytosol. This complex then targets to the endoplasmic reticulum by membrane-bound receptors, where the tail-anchored protein is released for insertion. This process is regulated by ATP binding and hydrolysis. ATP binding drives the homodimer towards the closed dimer state, facilitating recognition of newly synthesized TA membrane proteins. ATP hydrolysis is required for insertion. Subsequently, the homodimer reverts towards the open dimer state, lowering its affinity for the membrane-bound receptor, and returning it to the cytosol to initiate a new round of targeting. This Talaromyces marneffei (strain ATCC 18224 / CBS 334.59 / QM 7333) (Penicillium marneffei) protein is ATPase get3 (get3).